A 195-amino-acid polypeptide reads, in one-letter code: Obelin (195 aa).

A propeptide spanning residues 1–6 (MASKYA) is cleaved from the precursor. EF-hand domains lie at 17 to 52 (KWIK…DICK), 53 to 88 (NLGA…FPEF), 110 to 145 (LIRE…SGIS), and 146 to 181 (PSEE…FWYT). 5 residues coordinate Ca(2+): Asp-30, Asn-32, Asn-34, Gln-36, and Glu-41. 10 residues coordinate Ca(2+): Asp-123, Asp-125, Ser-127, Thr-129, Glu-134, Asp-159, Asp-161, Ser-163, Glu-165, and Glu-170.

This sequence belongs to the aequorin family.

In terms of biological role, ca(2+)-dependent bioluminescence photoprotein. Displays an emission peak at 495 nm (blue light). Trace amounts of calcium ion trigger the intramolecular oxidation of the chromophore, coelenterazine into coelenteramide and CO(2) with the concomitant emission of light. This Obelia geniculata (Knotted thread hydroid) protein is Obelin.